The sequence spans 94 residues: Small ribosomal subunit protein uS19 (94 aa).

It belongs to the universal ribosomal protein uS19 family.

In terms of biological role, protein S19 forms a complex with S13 that binds strongly to the 16S ribosomal RNA. The chain is Small ribosomal subunit protein uS19 from Halothermothrix orenii (strain H 168 / OCM 544 / DSM 9562).